The sequence spans 361 residues: MALTLEALAARFGGEIVGDGRCEVGALAPLDQAGPRQLAFLANPKYLAQVETTGAGAVLIAPGDLEKLGAAAHGRNFIVTPNPYAYFARVAQMFIDLAAPPRAAGVHPSATIDPAAQVAASAVIGPHVTVEAGAVIGERAQLDANVFVGRGTRIGDDSHLYPNVAIYHGCTLGPRAIVHSGAVIGSDGFGFAPDFVGEGDARTGAWVKIPQVGGVKVGPDVEIGANTTIDRGAMADTVIDECVKIDNLVQIGHNCRIGAYTVIAGCAGIAGSTTIGKHCMIGGAVGIAGHVTLGDYVIVTAKSGVSKSLPKAGIYTSAFPAVEHGDWNRSAALVRNLDKLRDRIKALETALAAREGDAGGA.

The active-site Proton acceptor is histidine 253.

This sequence belongs to the transferase hexapeptide repeat family. LpxD subfamily. Homotrimer.

It carries out the reaction a UDP-3-O-[(3R)-3-hydroxyacyl]-alpha-D-glucosamine + a (3R)-hydroxyacyl-[ACP] = a UDP-2-N,3-O-bis[(3R)-3-hydroxyacyl]-alpha-D-glucosamine + holo-[ACP] + H(+). It participates in bacterial outer membrane biogenesis; LPS lipid A biosynthesis. In terms of biological role, catalyzes the N-acylation of UDP-3-O-acylglucosamine using 3-hydroxyacyl-ACP as the acyl donor. Is involved in the biosynthesis of lipid A, a phosphorylated glycolipid that anchors the lipopolysaccharide to the outer membrane of the cell. This Burkholderia pseudomallei (strain 668) protein is UDP-3-O-acylglucosamine N-acyltransferase.